The primary structure comprises 591 residues: Aspartate--tRNA ligase (591 aa).

Residue Glu-173 participates in L-aspartate binding. The interval 197 to 200 (QLFK) is aspartate. Arg-219 is a binding site for L-aspartate. ATP is bound by residues 219 to 221 (RDE) and Gln-228. His-448 contributes to the L-aspartate binding site. Glu-482 is an ATP binding site. An L-aspartate-binding site is contributed by Arg-489. 534-537 (GLDR) contributes to the ATP binding site.

Belongs to the class-II aminoacyl-tRNA synthetase family. Type 1 subfamily. In terms of assembly, homodimer.

It is found in the cytoplasm. It catalyses the reaction tRNA(Asp) + L-aspartate + ATP = L-aspartyl-tRNA(Asp) + AMP + diphosphate. Catalyzes the attachment of L-aspartate to tRNA(Asp) in a two-step reaction: L-aspartate is first activated by ATP to form Asp-AMP and then transferred to the acceptor end of tRNA(Asp). The sequence is that of Aspartate--tRNA ligase from Shewanella sp. (strain MR-4).